Consider the following 330-residue polypeptide: DNA-directed RNA polymerase subunit alpha (330 aa).

The alpha N-terminal domain (alpha-NTD) stretch occupies residues 1–225; that stretch reads MSDLAIPTIS…KQFASLVSHS (225 aa). The segment at 237–330 is alpha C-terminal domain (alpha-CTD); it reads VKYTIPEEKY…KKKNKGIDED (94 aa).

It belongs to the RNA polymerase alpha chain family. As to quaternary structure, homodimer. The RNAP catalytic core consists of 2 alpha, 1 beta, 1 beta' and 1 omega subunit. When a sigma factor is associated with the core the holoenzyme is formed, which can initiate transcription.

The catalysed reaction is RNA(n) + a ribonucleoside 5'-triphosphate = RNA(n+1) + diphosphate. Its function is as follows. DNA-dependent RNA polymerase catalyzes the transcription of DNA into RNA using the four ribonucleoside triphosphates as substrates. The polypeptide is DNA-directed RNA polymerase subunit alpha (Dehalococcoides mccartyi (strain CBDB1)).